We begin with the raw amino-acid sequence, 145 residues long: uncharacterized protein (145 aa).

Residues 62 to 145 form a disordered region; the sequence is LPSVGGRMTA…QLPQQGGCPG (84 aa). Residues 84–95 show a composition bias toward pro residues; the sequence is ASSPEDPPLPHP.

This is an uncharacterized protein from Homo sapiens (Human).